Here is a 1481-residue protein sequence, read N- to C-terminus: Cystic fibrosis transmembrane conductance regulator (1481 aa).

Residues 1–77 (MQRSPLEKAS…KLINALRRCF (77 aa)) lie on the Cytoplasmic side of the membrane. The helical transmembrane segment at 78–98 (FWRFMFYGIILYLGEVTKAVQ) threads the bilayer. The ABC transmembrane type-1 1 domain maps to 81–365 (FMFYGIILYL…WAVQTWYDSL (285 aa)). At 99–122 (PLLLGRIIASYDPDNKAERSIAIY) the chain is on the extracellular side. Residues 123-146 (LGIGLCLLFIVRTLLLHPAIFGLH) form a helical membrane-spanning segment. Topologically, residues 147–195 (HIGMQMRIAMFSLIYKKTLKLSSRVLDKISIGQLVSLLSNNLNKFDEGL) are cytoplasmic. Residues 196-216 (ALAHFVWIAPLQVTLLMGLLW) traverse the membrane as a helical segment. The Extracellular portion of the chain corresponds to 217–222 (ELLQAF). Residues 223 to 243 (TFCGLAFLVVLAFLQAGLGKM) traverse the membrane as a helical segment. Over 244–298 (MMKYRDQRAGKINERLVITSEIIENIQSVKAYCWEEAMEKIIENLRQTELKLTRK) the chain is Cytoplasmic. Residues 299 to 319 (AAYVRYLNSSAFFFSGFFVVF) traverse the membrane as a helical segment. The Extracellular portion of the chain corresponds to 320–339 (LSVLPYALLKGIILRKIFTT). The helical transmembrane segment at 340–358 (ISFCIVLRMAVTRQFPWAV) threads the bilayer. Residues 359 to 858 (QTWYDSLGAI…YLRYITVHKS (500 aa)) are Cytoplasmic-facing. Residues Trp401, 457-464 (GSTGAGKT), and Gln492 each bind ATP. Residues 423–645 (NGDNNLFFSN…RPDFSSKLMG (223 aa)) form the ABC transporter 1 domain. The S-palmitoyl cysteine moiety is linked to residue Cys523. Ser548 and Ser659 each carry phosphoserine. Residues 653–831 (TAERRNSIIT…EEINEEDLRD (179 aa)) are disordered R region. Position 669 is a phosphoserine; by PKA (Ser669). A Phosphoserine modification is found at Ser685. Lys687 is covalently cross-linked (Glycyl lysine isopeptide (Lys-Gly) (interchain with G-Cter in ubiquitin)). Phosphoserine is present on residues Ser699 and Ser711. Position 716 is a phosphothreonine (Thr716). 5 positions are modified to phosphoserine: Ser736, Ser767, Ser790, Ser795, and Ser813. The chain crosses the membrane as a helical span at residues 859–879 (LMFVLIWCLVVFLAEVAASLV). In terms of domain architecture, ABC transmembrane type-1 2 spans 859–1155 (LMFVLIWCLV…AVNSSIDVDS (297 aa)). Over 880-918 (VLCLFPKILFQDKGNSTKSANNSYAVIITSTSSYYIFYI) the chain is Extracellular. Asn894 and Asn900 each carry an N-linked (GlcNAc...) asparagine glycan. The discontinuously helical transmembrane segment at 919 to 939 (YVGVADTLLALGLFRGLPLVH) threads the bilayer. Over 940–990 (TLITVSKTLHHKMLQSVLQAPMSTLNTLKTGGILNRFSKDIAVLDDLLPLT) the chain is Cytoplasmic. The chain crosses the membrane as a helical span at residues 991–1011 (IFDFVQLLLIVIGAVVVVSVL). The Extracellular portion of the chain corresponds to 1012–1013 (QP). The helical transmembrane segment at 1014–1034 (YIFLATVPVIAAFILLRAYFL) threads the bilayer. Topologically, residues 1035 to 1095 (HTSQQLKQLE…TANWFLYLST (61 aa)) are cytoplasmic. The helical transmembrane segment at 1096–1116 (LRWFQMRIEMIFVIFFIAVTF) threads the bilayer. At 1117-1130 (ISILTTGEGEGRVG) the chain is on the extracellular side. Residues 1131–1151 (IILTLAMNIMGTLQWAVNSSI) traverse the membrane as a helical segment. Topologically, residues 1152 to 1481 (DVDSLMRSVS…TEEEVQETKI (330 aa)) are cytoplasmic. The ABC transporter 2 domain maps to 1211–1444 (MTVKDLTAKY…KSLFRQAISP (234 aa)). ATP-binding positions include Tyr1220 and 1245 to 1252 (GRTGSGKS). Residues 1387 to 1481 (RTLKQAFADC…TEEEVQETKI (95 aa)) are interaction with GORASP2. Cys1396 carries the S-palmitoyl cysteine lipid modification. Residues 1452-1481 (PQRNSSRQKSRSNIAALKEETEEEVQETKI) form a disordered region. Positions 1453-1464 (QRNSSRQKSRSN) are enriched in low complexity. Ser1457 carries the post-translational modification Phosphoserine. Residues 1471–1481 (ETEEEVQETKI) are compositionally biased toward acidic residues. Positions 1479–1481 (TKI) match the PDZ-binding motif.

It belongs to the ABC transporter superfamily. ABCC family. CFTR transporter (TC 3.A.1.202) subfamily. As to quaternary structure, monomer; does not require oligomerization for channel activity. May form oligomers in the membrane. Interacts with SLC26A3, SLC26A6 and NHERF1. Interacts with SHANK2. Interacts with MYO6. Interacts (via C-terminus) with GOPC (via PDZ domain); this promotes CFTR internalization and thereby decreases channel activity. Interacts with SLC4A7 through NHERF1. Found in a complex with MYO5B and RAB11A. Interacts with ANO1. Interacts with SLC26A8. Interacts with AHCYL1; the interaction increases CFTR activity. Interacts with CSE1L. The core-glycosylated form interacts with GORASP2 (via PDZ GRASP-type 1 domain) in respone to ER stress. Interacts with MARCHF2; the interaction leads to CFTR ubiqtuitination and degradation. Interacts with ADGRG2. N-glycosylated. In terms of processing, phosphorylated; cAMP treatment promotes phosphorylation and activates the channel. Dephosphorylation decreases the ATPase activity (in vitro). Phosphorylation at PKA sites activates the channel. Phosphorylation at PKC sites enhances the response to phosphorylation by PKA. Phosphorylated by AMPK; this inhibits channel activity. Post-translationally, ubiquitinated, leading to its degradation in the lysosome. Deubiquitination by USP10 in early endosomes enhances its endocytic recycling to the cell membrane. Ubiquitinated by RNF185 during ER stress. Ubiquitinated by MARCHF2.

Its subcellular location is the apical cell membrane. It is found in the early endosome membrane. The protein resides in the cell membrane. It localises to the recycling endosome membrane. The protein localises to the endoplasmic reticulum membrane. Its subcellular location is the nucleus. The enzyme catalyses ATP + H2O + closed Cl(-) channel = ADP + phosphate + open Cl(-) channel.. It catalyses the reaction chloride(in) = chloride(out). It carries out the reaction hydrogencarbonate(in) = hydrogencarbonate(out). The catalysed reaction is ATP + H2O = ADP + phosphate + H(+). Its function is as follows. Epithelial ion channel that plays an important role in the regulation of epithelial ion and water transport and fluid homeostasis. Mediates the transport of chloride ions across the cell membrane. Possesses an intrinsic ATPase activity and utilizes ATP to gate its channel; the passive flow of anions through the channel is gated by cycles of ATP binding and hydrolysis by the ATP-binding domains. The ion channel is also permeable to HCO(3)(-); selectivity depends on the extracellular chloride concentration. Exerts its function also by modulating the activity of other ion channels and transporters. Contributes to the regulation of the pH and the ion content of the epithelial fluid layer. Modulates the activity of the epithelial sodium channel (ENaC) complex, in part by regulating the cell surface expression of the ENaC complex. May regulate bicarbonate secretion and salvage in epithelial cells by regulating the transporter SLC4A7. Can inhibit the chloride channel activity of ANO1. Plays a role in the chloride and bicarbonate homeostasis during sperm epididymal maturation and capacitation. The sequence is that of Cystic fibrosis transmembrane conductance regulator from Muntiacus reevesi (Reeves' muntjac).